The sequence spans 430 residues: Adenylosuccinate synthetase (430 aa).

Residues 13–19 (GDEGKGK) and 41–43 (GHT) each bind GTP. Catalysis depends on D14, which acts as the Proton acceptor. 2 residues coordinate Mg(2+): D14 and G41. Residues 14 to 17 (DEGK), 39 to 42 (NAGH), T130, R144, Q225, T240, and R304 each bind IMP. The Proton donor role is filled by H42. Substrate is bound at residue 300–306 (ASTGRPR). GTP is bound by residues R306, 332 to 334 (KLD), and 414 to 416 (STG).

The protein belongs to the adenylosuccinate synthetase family. Homodimer. Mg(2+) serves as cofactor.

The protein localises to the cytoplasm. The catalysed reaction is IMP + L-aspartate + GTP = N(6)-(1,2-dicarboxyethyl)-AMP + GDP + phosphate + 2 H(+). It functions in the pathway purine metabolism; AMP biosynthesis via de novo pathway; AMP from IMP: step 1/2. In terms of biological role, plays an important role in the de novo pathway of purine nucleotide biosynthesis. Catalyzes the first committed step in the biosynthesis of AMP from IMP. This chain is Adenylosuccinate synthetase, found in Xanthomonas axonopodis pv. citri (strain 306).